We begin with the raw amino-acid sequence, 157 residues long: MFDILMYLFETYIQNESEAMVDHELLTDELTRAGFHQDEIYKALNWLEKLTALQDTDAYPYLTRVGSKSVRIYTSEEMQLLDTPSRGFILFLEQVNVLDFTTREMVIDRVMELDTKYFSMDDLKWVILMVLFNVPGKESAYSQLEDLIFEEQEGPLH.

It belongs to the Smg family.

This is Protein Smg homolog from Colwellia psychrerythraea (strain 34H / ATCC BAA-681) (Vibrio psychroerythus).